Consider the following 145-residue polypeptide: Deoxyuridine 5'-triphosphate nucleotidohydrolase (145 aa).

Residues 65–67 (RSG), Asn-78, 82–84 (TID), and Met-92 each bind substrate.

This sequence belongs to the dUTPase family. Mg(2+) is required as a cofactor.

It carries out the reaction dUTP + H2O = dUMP + diphosphate + H(+). The protein operates within pyrimidine metabolism; dUMP biosynthesis; dUMP from dCTP (dUTP route): step 2/2. In terms of biological role, this enzyme is involved in nucleotide metabolism: it produces dUMP, the immediate precursor of thymidine nucleotides and it decreases the intracellular concentration of dUTP so that uracil cannot be incorporated into DNA. The protein is Deoxyuridine 5'-triphosphate nucleotidohydrolase of Chlorobium phaeobacteroides (strain BS1).